The chain runs to 390 residues: Phosphopentomutase (390 aa).

Positions 11, 283, 288, 324, 325, and 336 each coordinate Mn(2+).

The protein belongs to the phosphopentomutase family. The cofactor is Mn(2+).

The protein resides in the cytoplasm. The catalysed reaction is 2-deoxy-alpha-D-ribose 1-phosphate = 2-deoxy-D-ribose 5-phosphate. The enzyme catalyses alpha-D-ribose 1-phosphate = D-ribose 5-phosphate. It functions in the pathway carbohydrate degradation; 2-deoxy-D-ribose 1-phosphate degradation; D-glyceraldehyde 3-phosphate and acetaldehyde from 2-deoxy-alpha-D-ribose 1-phosphate: step 1/2. In terms of biological role, isomerase that catalyzes the conversion of deoxy-ribose 1-phosphate (dRib-1-P) and ribose 1-phosphate (Rib-1-P) to deoxy-ribose 5-phosphate (dRib-5-P) and ribose 5-phosphate (Rib-5-P), respectively. The polypeptide is Phosphopentomutase (Alkaliphilus metalliredigens (strain QYMF)).